The primary structure comprises 30 residues: Cyclotide cter-G (30 aa).

The cyclopeptide (Gly-Asn) cross-link spans 1-30 (GLPCGESCVFIPCITTVVGCSCKNKVCYNN). Cystine bridges form between Cys4–Cys20, Cys8–Cys22, and Cys13–Cys27.

Post-translationally, contains 3 disulfide bonds. This is a cyclic peptide.

Its function is as follows. Probably participates in a plant defense mechanism. This is Cyclotide cter-G from Clitoria ternatea (Butterfly pea).